Here is a 338-residue protein sequence, read N- to C-terminus: tRNA N6-adenosine threonylcarbamoyltransferase (338 aa).

His-111 and His-115 together coordinate Fe cation. Residues 134 to 138 (LVSGG), Asp-167, Gly-180, and Asn-272 each bind substrate. Asp-300 contacts Fe cation.

The protein belongs to the KAE1 / TsaD family. It depends on Fe(2+) as a cofactor.

Its subcellular location is the cytoplasm. The enzyme catalyses L-threonylcarbamoyladenylate + adenosine(37) in tRNA = N(6)-L-threonylcarbamoyladenosine(37) in tRNA + AMP + H(+). Functionally, required for the formation of a threonylcarbamoyl group on adenosine at position 37 (t(6)A37) in tRNAs that read codons beginning with adenine. Is involved in the transfer of the threonylcarbamoyl moiety of threonylcarbamoyl-AMP (TC-AMP) to the N6 group of A37, together with TsaE and TsaB. TsaD likely plays a direct catalytic role in this reaction. This Shewanella denitrificans (strain OS217 / ATCC BAA-1090 / DSM 15013) protein is tRNA N6-adenosine threonylcarbamoyltransferase.